The primary structure comprises 254 residues: Alcohol dehydrogenase (254 aa).

Position 10 to 33 (10 to 33) interacts with NAD(+); the sequence is FVAGLGGIGLDTSREIVKSGPKNL. Ser-138 is a binding site for substrate. Catalysis depends on Tyr-151, which acts as the Proton acceptor.

It belongs to the short-chain dehydrogenases/reductases (SDR) family. In terms of assembly, homodimer.

It catalyses the reaction a primary alcohol + NAD(+) = an aldehyde + NADH + H(+). The catalysed reaction is a secondary alcohol + NAD(+) = a ketone + NADH + H(+). In Drosophila nigra (Fruit fly), this protein is Alcohol dehydrogenase (Adh).